Here is a 342-residue protein sequence, read N- to C-terminus: Heat-inducible transcription repressor HrcA (342 aa).

The protein belongs to the HrcA family.

Its function is as follows. Negative regulator of class I heat shock genes (grpE-dnaK-dnaJ and groELS operons). Prevents heat-shock induction of these operons. This is Heat-inducible transcription repressor HrcA from Corynebacterium efficiens (strain DSM 44549 / YS-314 / AJ 12310 / JCM 11189 / NBRC 100395).